A 123-amino-acid polypeptide reads, in one-letter code: Protein Wnt-3b (123 aa).

The O-palmitoleoyl serine; by PORCN moiety is linked to residue Ser1. The cysteines at positions 89 and 104 are disulfide-linked. Residue Asn90 is glycosylated (N-linked (GlcNAc...) asparagine).

It belongs to the Wnt family. Post-translationally, palmitoleoylation is required for efficient binding to frizzled receptors. Depalmitoleoylation leads to Wnt signaling pathway inhibition.

The protein resides in the secreted. The protein localises to the extracellular space. Its subcellular location is the extracellular matrix. In terms of biological role, ligand for members of the frizzled family of seven transmembrane receptors. Probable developmental protein. May be a signaling molecule which affects the development of discrete regions of tissues. Is likely to signal over only few cell diameters. In Alopias vulpinus (Common thresher shark), this protein is Protein Wnt-3b (WNT-3B).